We begin with the raw amino-acid sequence, 271 residues long: GPN-loop GTPase 3 (271 aa).

13–18 (GAGKST) contacts GTP. The short motif at 70-72 (GPN) is the Gly-Pro-Asn (GPN)-loop; involved in dimer interface element. 173 to 176 (SKVD) contacts GTP.

This sequence belongs to the GPN-loop GTPase family. Heterodimers with GPN1 or GPN2. Binds to RNA polymerase II (RNAPII).

Small GTPase required for proper nuclear import of RNA polymerase II and III (RNAPII and RNAPIII). May act at an RNAP assembly step prior to nuclear import. The sequence is that of GPN-loop GTPase 3 from Eremothecium gossypii (strain ATCC 10895 / CBS 109.51 / FGSC 9923 / NRRL Y-1056) (Yeast).